The primary structure comprises 313 residues: tRNA dimethylallyltransferase (313 aa).

An ATP-binding site is contributed by 11–18; the sequence is GPTAAGKS. 13-18 provides a ligand contact to substrate; sequence TAAGKS. 3 interaction with substrate tRNA regions span residues 36-39, 160-164, and 244-249; these read DSAT, QRIQR, and RCVGYR.

The protein belongs to the IPP transferase family. As to quaternary structure, monomer. Mg(2+) serves as cofactor.

The enzyme catalyses adenosine(37) in tRNA + dimethylallyl diphosphate = N(6)-dimethylallyladenosine(37) in tRNA + diphosphate. Its function is as follows. Catalyzes the transfer of a dimethylallyl group onto the adenine at position 37 in tRNAs that read codons beginning with uridine, leading to the formation of N6-(dimethylallyl)adenosine (i(6)A). The protein is tRNA dimethylallyltransferase of Bordetella pertussis (strain Tohama I / ATCC BAA-589 / NCTC 13251).